A 452-amino-acid chain; its full sequence is Zinc finger protein GAI-ASSOCIATED FACTOR 1 (452 aa).

Polar residues predominate over residues 1–32 (MPVDLDNSSTVSGEASVSISSTGNQNPLPNST). A disordered region spans residues 1-47 (MPVDLDNSSTVSGEASVSISSTGNQNPLPNSTGKKKRNLPGMPDPES). The residue at position 53 (Ser53) is a Phosphoserine. 2 consecutive C2H2-type zinc fingers follow at residues 63–85 (FVCE…RRGH) and 104–134 (YVCP…CRKH). Residues 126–133 (IKKHFCRK) carry the Nuclear localization signal motif. The segment at 139 to 162 (WKCDKCSKKYAVQSDWKAHSKICG) adopts a C2H2-type 2; degenerate zinc-finger fold. Zn(2+) is bound by residues Cys141, Cys144, His157, Cys161, Cys168, Cys170, His183, and Cys187. Residues 166–189 (YKCDCGTLFSRRDSFITHRAFCDA) form a CCHC-type 2; atypical zinc finger. An SHR-binding region spans residues 176-188 (RRDSFITHRAFCD). The disordered stretch occupies residues 196 to 254 (RSHHSQSKKQNPEILTRKNPVPNPVPAPVDTESAKIKSSSTLTIKQSESPKTPPEIVQE). The segment covering 231 to 245 (IKSSSTLTIKQSESP) has biased composition (polar residues).

Interacts with the DELLA proteins (e.g. GAI/RGA2, RGA, RGL1, RGL2 and RGLG3), acting as coactivators and with TPR1 and TPR4, acting as a corepressors, at the promoter of GA20OX2 gene. In terms of tissue distribution, observed in vegetative tissues. Mainly expressed in hypocotyls, petioles, shoot apices, root tips, and trichomes, and, at low levels, in leaves, stems and flowers.

It is found in the nucleus. With respect to regulation, transcription activation is repressed by gibberellic acid GA(3) in the presence of TPR4. Its function is as follows. Transcription factor that acts as a positive regulator of gibberellin (GA) action, homeostasis and signaling. GA converts the GAF1 complex from transcriptional activator to repressor via the degradation of DELLA proteins. This Arabidopsis thaliana (Mouse-ear cress) protein is Zinc finger protein GAI-ASSOCIATED FACTOR 1.